Reading from the N-terminus, the 336-residue chain is 4-hydroxy-3-methylbut-2-enyl diphosphate reductase (336 aa).

Cys-21 contacts [4Fe-4S] cluster. 2 residues coordinate (2E)-4-hydroxy-3-methylbut-2-enyl diphosphate: His-50 and His-86. Residues His-50 and His-86 each contribute to the dimethylallyl diphosphate site. Positions 50 and 86 each coordinate isopentenyl diphosphate. Residue Cys-108 coordinates [4Fe-4S] cluster. Position 136 (His-136) interacts with (2E)-4-hydroxy-3-methylbut-2-enyl diphosphate. His-136 contacts dimethylallyl diphosphate. His-136 serves as a coordination point for isopentenyl diphosphate. Glu-138 serves as the catalytic Proton donor. Thr-177 is a (2E)-4-hydroxy-3-methylbut-2-enyl diphosphate binding site. Cys-207 lines the [4Fe-4S] cluster pocket. 4 residues coordinate (2E)-4-hydroxy-3-methylbut-2-enyl diphosphate: Ser-235, Ser-236, Asn-237, and Ser-280. Residues Ser-235, Ser-236, Asn-237, and Ser-280 each coordinate dimethylallyl diphosphate. 4 residues coordinate isopentenyl diphosphate: Ser-235, Ser-236, Asn-237, and Ser-280.

This sequence belongs to the IspH family. [4Fe-4S] cluster is required as a cofactor.

It carries out the reaction isopentenyl diphosphate + 2 oxidized [2Fe-2S]-[ferredoxin] + H2O = (2E)-4-hydroxy-3-methylbut-2-enyl diphosphate + 2 reduced [2Fe-2S]-[ferredoxin] + 2 H(+). It catalyses the reaction dimethylallyl diphosphate + 2 oxidized [2Fe-2S]-[ferredoxin] + H2O = (2E)-4-hydroxy-3-methylbut-2-enyl diphosphate + 2 reduced [2Fe-2S]-[ferredoxin] + 2 H(+). The protein operates within isoprenoid biosynthesis; dimethylallyl diphosphate biosynthesis; dimethylallyl diphosphate from (2E)-4-hydroxy-3-methylbutenyl diphosphate: step 1/1. It participates in isoprenoid biosynthesis; isopentenyl diphosphate biosynthesis via DXP pathway; isopentenyl diphosphate from 1-deoxy-D-xylulose 5-phosphate: step 6/6. Its function is as follows. Catalyzes the conversion of 1-hydroxy-2-methyl-2-(E)-butenyl 4-diphosphate (HMBPP) into a mixture of isopentenyl diphosphate (IPP) and dimethylallyl diphosphate (DMAPP). Acts in the terminal step of the DOXP/MEP pathway for isoprenoid precursor biosynthesis. The sequence is that of 4-hydroxy-3-methylbut-2-enyl diphosphate reductase from Mesorhizobium japonicum (strain LMG 29417 / CECT 9101 / MAFF 303099) (Mesorhizobium loti (strain MAFF 303099)).